A 537-amino-acid chain; its full sequence is Cytoplasmic 60S subunit biogenesis factor REI1 homolog (537 aa).

2 consecutive C2H2-type zinc fingers follow at residues 18–42 (YTCN…SDWH) and 83–107 (KTCE…STKH). 2 disordered regions span residues 101–151 (HLSS…AEEE) and 163–204 (SIHD…PEAL). Low complexity predominate over residues 192–204 (EETPTTTPKPEAL). A C2H2-type 3 zinc finger spans residues 260–284 (NECLTCGKMKVNVFAIQTHMRDKSH). Residues 312 to 322 (DWETEEEDKGE) are compositionally biased toward acidic residues. 2 disordered regions span residues 312–361 (DWET…ASSL) and 382–401 (GKHP…ADGI). The span at 323–339 (EDGGVRLGAKRESKVVD) shows a compositional bias: basic and acidic residues. Residues 340–356 (ENGDEVMEDEEGWETDS) show a composition bias toward acidic residues. Residues 383–395 (KHPHHSRENKKAH) are compositionally biased toward basic residues.

Belongs to the REI1 family. As to quaternary structure, associates with nascent pre-60S particles that have not yet entered the translating pool, and is released from mature 60S subunits.

The protein resides in the cytoplasm. In terms of biological role, pre-60S-associated factor involved in the cytoplasmic maturation of the 60S subunit. Involved in the dissociation and recycling of other late pre-60S factors before newly synthesized large ribosomal subunits enter translation. This chain is Cytoplasmic 60S subunit biogenesis factor REI1 homolog, found in Chaetomium thermophilum (strain DSM 1495 / CBS 144.50 / IMI 039719) (Thermochaetoides thermophila).